The following is a 209-amino-acid chain: Putative 3-methyladenine DNA glycosylase (209 aa).

This sequence belongs to the DNA glycosylase MPG family.

This Deinococcus geothermalis (strain DSM 11300 / CIP 105573 / AG-3a) protein is Putative 3-methyladenine DNA glycosylase.